The primary structure comprises 276 residues: 3-methyl-2-oxobutanoate hydroxymethyltransferase (276 aa).

Mg(2+) contacts are provided by D45 and D84. 3-methyl-2-oxobutanoate is bound by residues 45 to 46 (DS), D84, and K114. E116 lines the Mg(2+) pocket. The Proton acceptor role is filled by E183.

It belongs to the PanB family. In terms of assembly, homodecamer; pentamer of dimers. Requires Mg(2+) as cofactor.

The protein resides in the cytoplasm. The catalysed reaction is 3-methyl-2-oxobutanoate + (6R)-5,10-methylene-5,6,7,8-tetrahydrofolate + H2O = 2-dehydropantoate + (6S)-5,6,7,8-tetrahydrofolate. It participates in cofactor biosynthesis; (R)-pantothenate biosynthesis; (R)-pantoate from 3-methyl-2-oxobutanoate: step 1/2. Functionally, catalyzes the reversible reaction in which hydroxymethyl group from 5,10-methylenetetrahydrofolate is transferred onto alpha-ketoisovalerate to form ketopantoate. The polypeptide is 3-methyl-2-oxobutanoate hydroxymethyltransferase (Syntrophomonas wolfei subsp. wolfei (strain DSM 2245B / Goettingen)).